The sequence spans 341 residues: Chitin synthase 3 complex protein CSI2 (341 aa).

Over residues 35 to 70 (SSSTKAADSSSKGSSSAKTTTSLGKSSVTSKDVSSS) the composition is skewed to low complexity. 3 disordered regions span residues 35-78 (SSST…SSTK), 272-291 (DSLS…GKFT), and 298-341 (NYTS…DGKE).

Functionally, appears to be a structural component of the chitin synthase 3 complex. The sequence is that of Chitin synthase 3 complex protein CSI2 (CSI2) from Saccharomyces cerevisiae (strain ATCC 204508 / S288c) (Baker's yeast).